Here is a 433-residue protein sequence, read N- to C-terminus: 3-phosphoshikimate 1-carboxyvinyltransferase (433 aa).

3-phosphoshikimate-binding residues include Lys-21, Ser-22, and Arg-26. Phosphoenolpyruvate is bound at residue Lys-21. 2 residues coordinate phosphoenolpyruvate: Gly-92 and Arg-120. 3-phosphoshikimate is bound by residues Ser-166, Gln-168, Asp-317, and Lys-344. A phosphoenolpyruvate-binding site is contributed by Gln-168. Asp-317 (proton acceptor) is an active-site residue. 2 residues coordinate phosphoenolpyruvate: Arg-348 and Arg-391.

This sequence belongs to the EPSP synthase family. As to quaternary structure, monomer.

It is found in the cytoplasm. It carries out the reaction 3-phosphoshikimate + phosphoenolpyruvate = 5-O-(1-carboxyvinyl)-3-phosphoshikimate + phosphate. Its pathway is metabolic intermediate biosynthesis; chorismate biosynthesis; chorismate from D-erythrose 4-phosphate and phosphoenolpyruvate: step 6/7. Catalyzes the transfer of the enolpyruvyl moiety of phosphoenolpyruvate (PEP) to the 5-hydroxyl of shikimate-3-phosphate (S3P) to produce enolpyruvyl shikimate-3-phosphate and inorganic phosphate. This Caldicellulosiruptor bescii (strain ATCC BAA-1888 / DSM 6725 / KCTC 15123 / Z-1320) (Anaerocellum thermophilum) protein is 3-phosphoshikimate 1-carboxyvinyltransferase.